Here is a 130-residue protein sequence, read N- to C-terminus: MKDWLDEIKWNSDGLVPAIAQDHKTGRVLMMAWMNRESLALTATEQRAIYWSRSRGKLWRKGEESGHVQKLHELRLDCDADVIILMVEQLGHIACHTGRESCFYRVYEDGQWKIVDPVLKDPDAIYSAGH.

Aspartate 77 contacts Mg(2+). Cysteine 78 contacts Zn(2+). Residues aspartate 79 and aspartate 81 each coordinate Mg(2+). Cysteine 95 and cysteine 102 together coordinate Zn(2+).

Belongs to the PRA-CH family. In terms of assembly, homodimer. The cofactor is Mg(2+). Requires Zn(2+) as cofactor.

The protein resides in the cytoplasm. The enzyme catalyses 1-(5-phospho-beta-D-ribosyl)-5'-AMP + H2O = 1-(5-phospho-beta-D-ribosyl)-5-[(5-phospho-beta-D-ribosylamino)methylideneamino]imidazole-4-carboxamide. It functions in the pathway amino-acid biosynthesis; L-histidine biosynthesis; L-histidine from 5-phospho-alpha-D-ribose 1-diphosphate: step 3/9. Catalyzes the hydrolysis of the adenine ring of phosphoribosyl-AMP. The polypeptide is Phosphoribosyl-AMP cyclohydrolase (Pseudomonas putida (strain GB-1)).